We begin with the raw amino-acid sequence, 213 residues long: UPF0056 membrane protein AF_2111 (213 aa).

The next 6 membrane-spanning stretches (helical) occupy residues 1–21 (MDIA…FIII), 51–71 (IIAF…LDYF), 75–95 (ISSL…DILL), 118–138 (VFPL…GIVL), 142–162 (AGDV…YSIV), and 181–201 (ADIA…EFVF).

The protein belongs to the UPF0056 (MarC) family.

The protein resides in the cell membrane. The protein is UPF0056 membrane protein AF_2111 of Archaeoglobus fulgidus (strain ATCC 49558 / DSM 4304 / JCM 9628 / NBRC 100126 / VC-16).